Reading from the N-terminus, the 280-residue chain is Bis(5'-nucleosyl)-tetraphosphatase, symmetrical (280 aa).

Belongs to the Ap4A hydrolase family.

The enzyme catalyses P(1),P(4)-bis(5'-adenosyl) tetraphosphate + H2O = 2 ADP + 2 H(+). Functionally, hydrolyzes diadenosine 5',5'''-P1,P4-tetraphosphate to yield ADP. In Escherichia coli O17:K52:H18 (strain UMN026 / ExPEC), this protein is Bis(5'-nucleosyl)-tetraphosphatase, symmetrical.